The sequence spans 249 residues: Phosphoserine phosphatase (249 aa).

It belongs to the HAD-like hydrolase superfamily. As to quaternary structure, homodimer. Mg(2+) is required as a cofactor. The cofactor is Co(2+).

It carries out the reaction O-phospho-L-serine + H2O = L-serine + phosphate. It catalyses the reaction O-phospho-D-serine + H2O = D-serine + phosphate. Its pathway is amino-acid biosynthesis; L-serine biosynthesis; L-serine from 3-phospho-D-glycerate: step 3/3. Catalyzes the last step of the phosphorylated serine biosynthetic pathway, i.e. dephosphorylation of O-phospho-L-serine to form L-serine. Is also able to dephosphorylate O-phospho-D-serine with similar efficiency. Displays a poor activity on L-phosphothreonine, and cannot use L-phosphotyrosine, pyridoxal phosphate, glucose 6-phosphate, or fructose 6-phosphate as substrates. In Thermus thermophilus (strain ATCC BAA-163 / DSM 7039 / HB27), this protein is Phosphoserine phosphatase.